The sequence spans 1374 residues: Y' element ATP-dependent helicase YLL067C (1374 aa).

A disordered region spans residues 321–345 (AGEAASSDHDQKISRVTRKRPREPK). Residues 375 to 552 (EIYMADTPSV…LQRIGLTGLA (178 aa)) enclose the Helicase ATP-binding domain. Position 388-395 (388-395 (APPGYGKT)) interacts with ATP. A DEAH box motif is present at residues 498 to 501 (DEFH). Residues 609–758 (KLLLALFEIE…EFYGLESKKG (150 aa)) form the Helicase C-terminal domain. Over residues 832-1011 (ANASTNATTN…ATTTESTNAS (180 aa)) the composition is skewed to low complexity. Residues 832-1035 (ANASTNATTN…RFHPVTDINK (204 aa)) are disordered. The segment covering 1012 to 1035 (AKEDANKDGNAEDNRFHPVTDINK) has biased composition (basic and acidic residues).

Belongs to the helicase family. Yeast subtelomeric Y' repeat subfamily.

Catalyzes DNA unwinding and is involved in telomerase-independent telomere maintenance. The sequence is that of Y' element ATP-dependent helicase YLL067C from Saccharomyces cerevisiae (strain ATCC 204508 / S288c) (Baker's yeast).